A 102-amino-acid chain; its full sequence is Small ribosomal subunit protein uS10 (102 aa).

This sequence belongs to the universal ribosomal protein uS10 family. In terms of assembly, part of the 30S ribosomal subunit.

Involved in the binding of tRNA to the ribosomes. In Exiguobacterium sp. (strain ATCC BAA-1283 / AT1b), this protein is Small ribosomal subunit protein uS10.